The following is a 223-amino-acid chain: Noggin (223 aa).

An N-terminal signal peptide occupies residues 1–26 (MDPPRLRVATYLLLLSVGLLLHGGAC). The N-linked (GlcNAc...) asparagine glycan is linked to Asn61. 4 disulfides stabilise this stretch: Cys143–Cys180, Cys166–Cys217, Cys172–Cys219, and Cys195–Cys204.

Belongs to the noggin family. Homodimer.

The protein resides in the secreted. In terms of biological role, inhibitor of bone morphogenetic proteins (BMP) signaling. This is Noggin (nog) from Takifugu rubripes (Japanese pufferfish).